A 206-amino-acid polypeptide reads, in one-letter code: ATP phosphoribosyltransferase (206 aa).

This sequence belongs to the ATP phosphoribosyltransferase family. Short subfamily. In terms of assembly, heteromultimer composed of HisG and HisZ subunits.

The protein localises to the cytoplasm. The enzyme catalyses 1-(5-phospho-beta-D-ribosyl)-ATP + diphosphate = 5-phospho-alpha-D-ribose 1-diphosphate + ATP. It participates in amino-acid biosynthesis; L-histidine biosynthesis; L-histidine from 5-phospho-alpha-D-ribose 1-diphosphate: step 1/9. In terms of biological role, catalyzes the condensation of ATP and 5-phosphoribose 1-diphosphate to form N'-(5'-phosphoribosyl)-ATP (PR-ATP). Has a crucial role in the pathway because the rate of histidine biosynthesis seems to be controlled primarily by regulation of HisG enzymatic activity. The sequence is that of ATP phosphoribosyltransferase from Leptospira interrogans serogroup Icterohaemorrhagiae serovar copenhageni (strain Fiocruz L1-130).